The following is a 401-amino-acid chain: Splicing factor 45 (401 aa).

Ser2 is subject to N-acetylserine. Ser2 is modified (phosphoserine). Lys15 is covalently cross-linked (Glycyl lysine isopeptide (Lys-Gly) (interchain with G-Cter in SUMO2)). Lys21 is subject to N6-acetyllysine. Glycyl lysine isopeptide (Lys-Gly) (interchain with G-Cter in SUMO2) cross-links involve residues Lys24 and Lys33. At Lys41 the chain carries N6-acetyllysine; alternate. Lys41 is covalently cross-linked (Glycyl lysine isopeptide (Lys-Gly) (interchain with G-Cter in SUMO2); alternate). Positions 57–68 (LKRGGSSDDRQI) are enriched in basic and acidic residues. Disordered stretches follow at residues 57-84 (LKRGGSSDDRQIVDTPPHVAAGLKDPVP) and 114-233 (RQRE…FLAN). A Glycyl lysine isopeptide (Lys-Gly) (interchain with G-Cter in SUMO2) cross-link involves residue Lys58. Thr71 carries the post-translational modification Phosphothreonine. Over residues 114–153 (RQREERQRQRELERQKEIEEREKRRKDRHEASGFARRPDP) the composition is skewed to basic and acidic residues. Residues Ser155 and Ser169 each carry the phosphoserine modification. The span at 182 to 200 (VEKDKELPRDFPYEEDSRP) shows a compositional bias: basic and acidic residues. Ser222 is subject to Phosphoserine. Residues 235–283 (GGTVAHKIMQKYGFREGQGLGKHEQGLSTALSVEKTSKRGGKIIVGDAT) form the G-patch domain. Phosphothreonine is present on Thr237. A Glycyl lysine isopeptide (Lys-Gly) (interchain with G-Cter in SUMO2) cross-link involves residue Lys256. Ser266 bears the Phosphoserine mark. A Glycyl lysine isopeptide (Lys-Gly) (interchain with G-Cter in SUMO2) cross-link involves residue Lys276. Ser291 and Ser293 each carry phosphoserine. The region spanning 306–385 (VVLLRNMVGA…YFGGRVVKAC (80 aa)) is the RRM domain.

As to quaternary structure, binds SXL. Associates with the spliceosome. Interacts with SF3B1, SF1 and U2AF2.

It localises to the nucleus. In terms of biological role, splice factor that binds to the single-stranded 3'AG at the exon/intron border and promotes its utilization in the second catalytic step. Involved in the regulation of alternative splicing and the utilization of cryptic splice sites. Promotes the utilization of a cryptic splice site created by the beta-110 mutation in the HBB gene. The resulting frameshift leads to sickle cell anemia. This chain is Splicing factor 45 (RBM17), found in Homo sapiens (Human).